We begin with the raw amino-acid sequence, 704 residues long: Meprin A subunit beta (704 aa).

The first 20 residues, 1 to 20 (MDARHWPWFLVFATFLLVSG), serve as a signal peptide directing secretion. The propeptide occupies 21-64 (LPAPEKFVKDIDGGIDQDIFDINEDLGLDLFEGDIKLEASGRNS). Residues 21–654 (LPAPEKFVKD…RCEKRGSTKD (634 aa)) lie on the Extracellular side of the membrane. The region spanning 63–257 (NSIIGDNYRW…LKLNQLYSCT (195 aa)) is the Peptidase M12A domain. 3 cysteine pairs are disulfide-bonded: cysteine 104/cysteine 256, cysteine 125/cysteine 145, and cysteine 266/cysteine 428. Histidine 153 serves as a coordination point for Zn(2+). Glutamate 154 is an active-site residue. Positions 157 and 163 each coordinate Zn(2+). N-linked (GlcNAc...) asparagine glycans are attached at residues asparagine 193, asparagine 219, asparagine 316, asparagine 422, asparagine 437, asparagine 528, asparagine 547, and asparagine 592. The MAM domain maps to 261-430 (SFMDSCDFEL…INLSETRCPH (170 aa)). The MATH domain occupies 431–585 (HIWHIQNFTQ…GDDVYILLTV (155 aa)). In terms of domain architecture, EGF-like spans 607–647 (VHNACSEVECQNGGICTLQEGRAECKCPAGEDWWYMGKRCE). 3 cysteine pairs are disulfide-bonded: cysteine 611-cysteine 622, cysteine 616-cysteine 631, and cysteine 633-cysteine 646. Residues 655–678 (TIVIAVSSTVTVFAVMLIITLISV) traverse the membrane as a helical segment. Residues 679 to 704 (YCTRRKYRKKASAKTAAMNLENQHAF) are Cytoplasmic-facing. Threonine 693 is modified (phosphothreonine).

In terms of assembly, homotetramer consisting of disulfide-linked beta subunits, or heterotetramer of two alpha and two beta subunits formed by non-covalent association of two disulfide-linked heterodimers. Interacts with MBL2 through its carbohydrate moiety. This interaction may inhibit its catalytic activity. Interacts with TSPAN8. It depends on Zn(2+) as a cofactor. Post-translationally, N-glycosylated; contains high mannose and/or complex biantennary structures. In terms of processing, proteolytically activated by trypsin in the intestinal lumen and kallikrein-related peptidases in other tissues. Phosphorylated by PKC at multiple sites of its cytoplasmic part. Phosphorylation dcreases activity at the cell surface, leading to diminished substrate cleavage. As to expression, kidney, intestinal brush borders and salivary ducts.

It localises to the cell membrane. It is found in the secreted. It carries out the reaction Hydrolysis of proteins, including azocasein, and peptides. Hydrolysis of 5-His-|-Leu-6, 6-Leu-|-Cys-7, 14-Ala-|-Leu-15 and 19-Cys-|-Gly-20 bonds in insulin B chain.. Strongly inhibited by fetuin-A/AHSG. Functionally, membrane metallopeptidase that sheds many membrane-bound proteins. Exhibits a strong preference for acidic amino acids at the P1' position. Known substrates include: FGF19, VGFA, IL1B, IL18, procollagen I and III, E-cadherin, KLK7, gastrin, ADAM10, tenascin-C. The presence of several pro-inflammatory cytokine among substrates implicate MEP1B in inflammation. It is also involved in tissue remodeling due to its capability to degrade extracellular matrix components. The chain is Meprin A subunit beta (Mep1b) from Rattus norvegicus (Rat).